A 176-amino-acid chain; its full sequence is Peptidyl-prolyl cis-trans isomerase cyp5 (176 aa).

A PPIase cyclophilin-type domain is found at 10-173; the sequence is FFDVAVNGKP…AKVEIVDCGE (164 aa).

It belongs to the cyclophilin-type PPIase family.

The catalysed reaction is [protein]-peptidylproline (omega=180) = [protein]-peptidylproline (omega=0). Functionally, PPIases accelerate the folding of proteins. It catalyzes the cis-trans isomerization of proline imidic peptide bonds in oligopeptides. The sequence is that of Peptidyl-prolyl cis-trans isomerase cyp5 (cyp5) from Rhizopus delemar (strain RA 99-880 / ATCC MYA-4621 / FGSC 9543 / NRRL 43880) (Mucormycosis agent).